Here is a 612-residue protein sequence, read N- to C-terminus: Protein MUK1 (612 aa).

A compositionally biased stretch (basic and acidic residues) spans 40–50 (EDQNDNERSSC). The segment at 40-66 (EDQNDNERSSCDGDENSTTGERLENNK) is disordered. The span at 55–66 (NSTTGERLENNK) shows a compositional bias: polar residues. Phosphoserine occurs at positions 67, 163, 185, and 245. The region spanning 273 to 414 (TEYNKLLNEK…VEGLTKNDFS (142 aa)) is the VPS9 domain. Residues 494-560 (IRSYTPPHPN…SSASLEHGNR (67 aa)) are disordered. Residues 503-517 (NNTSNNNLHSSNNLN) are compositionally biased toward low complexity. Residues 518 to 529 (IPRSSSQLSMEL) are compositionally biased toward polar residues. A compositionally biased stretch (basic and acidic residues) spans 530–542 (SNRDTTEMSRDGS). Over residues 543 to 554 (RSTSSSSRSSAS) the composition is skewed to low complexity.

The protein resides in the cytoplasm. Putative GTPase-activating protein. The polypeptide is Protein MUK1 (MUK1) (Saccharomyces cerevisiae (strain ATCC 204508 / S288c) (Baker's yeast)).